Here is a 141-residue protein sequence, read N- to C-terminus: Mitochondrial import inner membrane translocase subunit Tim16 (141 aa).

Disordered stretches follow at residues 34–53 and 108–141; these read AARR…SNLR and LDHE…RQRR. Residues 60–113 form a J-like region; it reads EAKQILNIDDPKNVDAITKNYEHLFQVNERSKGGSFYIQSKVFRAKERLDHEIK. Over residues 108 to 118 the composition is skewed to basic and acidic residues; sequence LDHEIKAHEQP.

The protein belongs to the TIM16/PAM16 family. As to quaternary structure, probable component of the PAM complex at least composed of a mitochondrial HSP70 protein, Roe1, TIM44, blp/TIM16 and TIM14. Associates with the TIM23 complex. In terms of tissue distribution, expressed in distinct cells in the embryonic and larval nervous system.

Its subcellular location is the mitochondrion inner membrane. Its function is as follows. Regulates ATP-dependent protein translocation into the mitochondrial matrix. Essential for larval development. This is Mitochondrial import inner membrane translocase subunit Tim16 (blp) from Drosophila melanogaster (Fruit fly).